We begin with the raw amino-acid sequence, 401 residues long: Phosrestin-1 (401 aa).

Serine 366 is subject to Phosphoserine; by CaMK.

The protein belongs to the arrestin family. In terms of processing, phosphorylated upon light exposure. In terms of tissue distribution, expressed in photoreceptor cells.

Its subcellular location is the cell projection. The protein resides in the rhabdomere. Functionally, regulates photoreceptor cell deactivation. Arr1 and Arr2 proteins are mediators of rhodopsin inactivation and are essential for the termination of the phototransduction cascade. Involved in regulating normal cycles of per nuclear accumulation in brain circadian neurons and thus is important for normal circadian behavior. In the dark, functions with Arr1 to promote the formation of cytosolic Bdbt foci, which are required for dco localization to photoreceptor nuclei where it phosphorylates and activates degradation of per. This chain is Phosrestin-1 (Arr2), found in Drosophila melanogaster (Fruit fly).